Reading from the N-terminus, the 2381-residue chain is Nipped-B-like protein A (2381 aa).

An HEAT 1 repeat occupies 85-124; sequence SDELEGDVPVLLQLLMSRNPNIFRNKTAPNTPQYPAQAGI. Disordered regions lie at residues 131–211, 240–289, and 329–503; these read PPYK…HLQQ, HLLQ…DIVG, and LAAI…ELPP. Residues 138–158 show a composition bias toward polar residues; the sequence is GSMQGSPASANYQQASMSHSP. Composition is skewed to basic and acidic residues over residues 254–273 and 333–355; these read GTKD…KSSE and ERME…DKDK. Over residues 373 to 389 the composition is skewed to gly residues; the sequence is GTAGSGSGAPGGGGGAN. The span at 451–473 shows a compositional bias: basic and acidic residues; it reads VKHEHDHDPEHPHYDDKQPDTPR. Residues 552-565 carry the PxVxL motif motif; it reads KKSVKPVVVLQKLS. The segment covering 570-580 has biased composition (basic and acidic residues); the sequence is QRLMRERDSRA. 2 disordered regions span residues 570 to 604 and 629 to 708; these read QRLM…SVLK and RKRS…NEVA. The span at 581–592 shows a compositional bias: polar residues; sequence SKSGKNRLSSGR. 2 stretches are compositionally biased toward basic and acidic residues: residues 633–642 and 658–694; these read TVNERPKYAE and KDRD…RYDD. HEAT repeat units lie at residues 1299 to 1337, 1375 to 1413, 1477 to 1516, and 1843 to 1881; these read SQSF…VDPS, PQLT…EQPN, YDWF…HILK, and LIHP…KYTG. 2 disordered regions span residues 2005–2095 and 2228–2271; these read IPGR…DLDD and LLGG…GDSA. Positions 2006–2021 are enriched in basic residues; the sequence is PGRKSRKRRRRRRRPQ. Positions 2040-2056 are enriched in basic and acidic residues; sequence EEERGAQDEERERHSGD. Residues 2057 to 2068 are compositionally biased toward acidic residues; that stretch reads EEYDDDDYEEDE. The span at 2077 to 2086 shows a compositional bias: basic and acidic residues; that stretch reads KPTEDIRQSE.

This sequence belongs to the SCC2/Nipped-B family.

Its subcellular location is the nucleus. Functionally, may play a structural role in chromatin. Involved in sister chromatid cohesion, possibly by facilitating the cohesin complex loading. Transcription factor, which may promote cortical neuron migration during brain development by regulating the transcription of crucial genes in this process. This Danio rerio (Zebrafish) protein is Nipped-B-like protein A (nipbla).